A 353-amino-acid polypeptide reads, in one-letter code: Protein U67 (353 aa).

This sequence belongs to the herpesviridae UL95 family.

The sequence is that of Protein U67 (U67) from Homo sapiens (Human).